The following is a 353-amino-acid chain: Protein RecA (353 aa).

An ATP-binding site is contributed by 67–74 (GPESSGKT).

Belongs to the RecA family.

The protein resides in the cytoplasm. Can catalyze the hydrolysis of ATP in the presence of single-stranded DNA, the ATP-dependent uptake of single-stranded DNA by duplex DNA, and the ATP-dependent hybridization of homologous single-stranded DNAs. It interacts with LexA causing its activation and leading to its autocatalytic cleavage. In Salmonella agona (strain SL483), this protein is Protein RecA.